The sequence spans 258 residues: Imidazole glycerol phosphate synthase subunit HisF (258 aa).

Catalysis depends on residues Asp-11 and Asp-130.

Belongs to the HisA/HisF family. In terms of assembly, heterodimer of HisH and HisF.

It is found in the cytoplasm. It catalyses the reaction 5-[(5-phospho-1-deoxy-D-ribulos-1-ylimino)methylamino]-1-(5-phospho-beta-D-ribosyl)imidazole-4-carboxamide + L-glutamine = D-erythro-1-(imidazol-4-yl)glycerol 3-phosphate + 5-amino-1-(5-phospho-beta-D-ribosyl)imidazole-4-carboxamide + L-glutamate + H(+). Its pathway is amino-acid biosynthesis; L-histidine biosynthesis; L-histidine from 5-phospho-alpha-D-ribose 1-diphosphate: step 5/9. Functionally, IGPS catalyzes the conversion of PRFAR and glutamine to IGP, AICAR and glutamate. The HisF subunit catalyzes the cyclization activity that produces IGP and AICAR from PRFAR using the ammonia provided by the HisH subunit. This is Imidazole glycerol phosphate synthase subunit HisF from Blochmanniella pennsylvanica (strain BPEN).